A 291-amino-acid polypeptide reads, in one-letter code: Pyridoxal 5'-phosphate synthase subunit PdxS (291 aa).

Asp23 is a binding site for D-ribose 5-phosphate. The Schiff-base intermediate with D-ribose 5-phosphate role is filled by Lys80. Gly152 is a D-ribose 5-phosphate binding site. Residue Arg164 coordinates D-glyceraldehyde 3-phosphate. D-ribose 5-phosphate contacts are provided by residues Gly213 and 234 to 235 (GS).

It belongs to the PdxS/SNZ family. In terms of assembly, in the presence of PdxT, forms a dodecamer of heterodimers.

It catalyses the reaction aldehydo-D-ribose 5-phosphate + D-glyceraldehyde 3-phosphate + L-glutamine = pyridoxal 5'-phosphate + L-glutamate + phosphate + 3 H2O + H(+). It participates in cofactor biosynthesis; pyridoxal 5'-phosphate biosynthesis. Catalyzes the formation of pyridoxal 5'-phosphate from ribose 5-phosphate (RBP), glyceraldehyde 3-phosphate (G3P) and ammonia. The ammonia is provided by the PdxT subunit. Can also use ribulose 5-phosphate and dihydroxyacetone phosphate as substrates, resulting from enzyme-catalyzed isomerization of RBP and G3P, respectively. The sequence is that of Pyridoxal 5'-phosphate synthase subunit PdxS from Streptococcus pneumoniae (strain P1031).